The primary structure comprises 124 residues: Tax1-binding protein 3 (124 aa).

The residue at position 2 (Ser2) is an N-acetylserine. Positions 15–112 (RVEIHKLRQG…EVVRLLVTRQ (98 aa)) constitute a PDZ domain. Ser61 carries the phosphoserine modification.

As to quaternary structure, interacts (via its PDZ domain) with GLS2. Interacts (via its PDZ domain) with RTKN (via the C-terminal region); this interaction facilitates Rho-mediated activation of the FOS serum response element (SRE). Interacts (via its PDZ domain) with CTNNB1; this interaction inhibits the transcriptional activity of CTNNB1. Interacts with HTLV-1 TAX protein. Interacts (via PDZ domain) with ARHGEF16. Interacts (via PDZ domain) with KCNJ4 (via C-terminus). Competes with LIN7A for KCNJ4 binding. Interacts with ADGRB2. Ubiquitous. Detected in brain, heart, kidney, lung, small intestine and skeletal muscle. Detected in various cell lines including HeLa. Weakly expressed in peripheral blood leukocytes.

Its subcellular location is the cytoplasm. The protein localises to the nucleus. It is found in the cell membrane. In terms of biological role, may regulate a number of protein-protein interactions by competing for PDZ domain binding sites. Binds CTNNB1 and may thereby act as an inhibitor of the Wnt signaling pathway. Competes with LIN7A for KCNJ4 binding, and thereby promotes KCNJ4 internalization. May play a role in the Rho signaling pathway. May play a role in activation of CDC42 by the viral protein HPV16 E6. This is Tax1-binding protein 3 from Homo sapiens (Human).